Here is a 2849-residue protein sequence, read N- to C-terminus: Immunoglobulin-like and fibronectin type III domain-containing protein 1 (2849 aa).

Residues Ala-82 to Leu-108 are disordered. A compositionally biased stretch (low complexity) spans Gly-90 to Ser-101. An Ig-like 1 domain is found at Pro-187–Thr-277. A coiled-coil region spans residues Ile-347–His-380. The Ig-like 2 domain occupies Pro-468–Gly-557. 12 disordered regions span residues Leu-577–Leu-600, Val-652–Arg-760, Tyr-864–Ser-924, Val-962–Gln-981, Glu-1061–Ala-1103, Thr-1221–Gly-1258, Ser-1312–His-1338, Arg-1350–Glu-1384, Glu-1498–Glu-1523, Glu-1654–Ile-1675, Gln-1724–His-1780, and Gly-1827–His-2055. Positions His-717–Arg-742 are enriched in basic and acidic residues. A compositionally biased stretch (polar residues) spans Gly-866–Ser-880. A compositionally biased stretch (gly residues) spans Arg-1070–Gly-1084. Residues Ser-1873–Leu-1882 show a composition bias toward polar residues. 2 stretches are compositionally biased toward basic and acidic residues: residues Ser-1988 to Gln-2004 and Ser-2012 to Ser-2021. The 104-residue stretch at Pro-2034–Thr-2137 folds into the Ig-like 3 domain. Fibronectin type-III domains follow at residues Pro-2244 to Glu-2339, Pro-2344 to Pro-2443, and Pro-2445 to Ala-2540. The 85-residue stretch at Pro-2544 to Thr-2628 folds into the Ig-like 4 domain. Residues Ala-2641–Gln-2735 form the Fibronectin type-III 4 domain. The region spanning Pro-2749 to Thr-2845 is the Ig-like 5 domain.

As to quaternary structure, interacts with FLNC. Interacts with KY. As to expression, isoform 1, isoform 3 and isoform 4 are expressed in skeletal muscle while isoform 2 is detected in both skeletal muscle and heart (at protein level).

It is found in the nucleus. The protein localises to the cytoplasm. Its subcellular location is the myofibril. It localises to the sarcomere. The protein resides in the z line. The protein is Immunoglobulin-like and fibronectin type III domain-containing protein 1 (Igfn1) of Mus musculus (Mouse).